A 688-amino-acid chain; its full sequence is Lipase (688 aa).

An N-terminal signal peptide occupies residues 1–35; the sequence is MKTRQNKYSIRKFSVGASSILIAALLFMGGGSAQA. Positions 31 to 309 are disordered; it reads GSAQAAEQQQ…KSAKQKQYKN (279 aa). Positions 36 to 302 are cleaved as a propeptide — removed in mature form; it reads AEQQQDKGTV…KNEDQTNKSA (267 aa). Residues 45 to 54 show a composition bias toward polar residues; it reads VENSTTQSIG. Residues 68–79 show a composition bias toward low complexity; that stretch reads NKNVNEKSNVNS. Basic and acidic residues-rich tracts occupy residues 84 to 95, 103 to 117, and 126 to 143; these read ESLHNETPKNED, SQND…EQNK, and HSEE…KHAS. A compositionally biased stretch (polar residues) spans 144-172; that stretch reads ENNQTLHSKAAQSNEDVKTKPSQLDNTAA. Positions 173–183 are enriched in basic and acidic residues; the sequence is KQEDSQKENLS. Over residues 184-211 the composition is skewed to polar residues; sequence KQDTQSSKTTDLLRATAQNQSKDSQSTE. Basic and acidic residues predominate over residues 240–267; the sequence is SKEEPLKVDKQANPTTDKDKSSKNDKGS. Positions 274–289 are enriched in polar residues; it reads LESNAVATTNKQSKQQ. Serine 418 acts as the Nucleophile in catalysis. The active-site Charge relay system is the aspartate 609. Aspartate 647 is a Ca(2+) binding site. The active-site Charge relay system is histidine 648. Ca(2+) is bound by residues aspartate 650, aspartate 655, and aspartate 658.

This sequence belongs to the AB hydrolase superfamily. Lipase family.

The protein localises to the secreted. It catalyses the reaction a triacylglycerol + H2O = a diacylglycerol + a fatty acid + H(+). The chain is Lipase (lip) from Staphylococcus epidermidis.